A 192-amino-acid polypeptide reads, in one-letter code: Fanconi anemia core complex-associated protein 20 (192 aa).

The span at 1-16 shows a compositional bias: basic residues; sequence MEATRRSRLSLSRRRP. Disordered regions lie at residues 1–34 and 51–151; these read MEAT…PDGG and LNVD…SSVD. A compositionally biased stretch (basic and acidic residues) spans 66 to 76; sequence QEPRRSPERPP. Serine 119 and serine 149 each carry phosphoserine. Low complexity predominate over residues 132–149; it reads PSAEEQPSEEQPSQRQSS. The UBZ2-type zinc-finger motif lies at 156-192; it reads LQSCPMCQVDFAPGLAQLDIDGHLAQCLADSTDDIEW. Zn(2+) is bound by residues cysteine 159, cysteine 162, histidine 178, and cysteine 182.

In terms of assembly, component of the Fanconi anemia (FA) complex. Interacts with FANCA; interaction is direct. Interacts with REV1.

It is found in the nucleus. The protein localises to the chromosome. In terms of biological role, component of the Fanconi anemia (FA) complex required to recruit the FA complex to DNA interstrand cross-links (ICLs) and promote ICLs repair. Following DNA damage recognizes and binds 'Lys-63'-linked ubiquitin generated by RNF8 at ICLs and recruits other components of the FA complex. Promotes translesion synthesis via interaction with REV1. This Bos taurus (Bovine) protein is Fanconi anemia core complex-associated protein 20.